Here is a 439-residue protein sequence, read N- to C-terminus: Xylose isomerase (439 aa).

Active-site residues include H101 and D104. 7 residues coordinate Mg(2+): E232, E268, H271, D296, D307, D309, and D339.

The protein belongs to the xylose isomerase family. Homotetramer. Requires Mg(2+) as cofactor.

The protein resides in the cytoplasm. It carries out the reaction alpha-D-xylose = alpha-D-xylulofuranose. This is Xylose isomerase from Pseudoalteromonas atlantica (strain T6c / ATCC BAA-1087).